The primary structure comprises 558 residues: Dihydroxy-acid dehydratase (558 aa).

Position 78 (Asp-78) interacts with Mg(2+). Cys-119 serves as a coordination point for [2Fe-2S] cluster. 2 residues coordinate Mg(2+): Asp-120 and Lys-121. N6-carboxylysine is present on Lys-121. [2Fe-2S] cluster is bound at residue Cys-192. Glu-445 contributes to the Mg(2+) binding site. Catalysis depends on Ser-471, which acts as the Proton acceptor.

It belongs to the IlvD/Edd family. Homodimer. It depends on [2Fe-2S] cluster as a cofactor. The cofactor is Mg(2+).

The enzyme catalyses (2R)-2,3-dihydroxy-3-methylbutanoate = 3-methyl-2-oxobutanoate + H2O. The catalysed reaction is (2R,3R)-2,3-dihydroxy-3-methylpentanoate = (S)-3-methyl-2-oxopentanoate + H2O. It participates in amino-acid biosynthesis; L-isoleucine biosynthesis; L-isoleucine from 2-oxobutanoate: step 3/4. It functions in the pathway amino-acid biosynthesis; L-valine biosynthesis; L-valine from pyruvate: step 3/4. Functionally, functions in the biosynthesis of branched-chain amino acids. Catalyzes the dehydration of (2R,3R)-2,3-dihydroxy-3-methylpentanoate (2,3-dihydroxy-3-methylvalerate) into 2-oxo-3-methylpentanoate (2-oxo-3-methylvalerate) and of (2R)-2,3-dihydroxy-3-methylbutanoate (2,3-dihydroxyisovalerate) into 2-oxo-3-methylbutanoate (2-oxoisovalerate), the penultimate precursor to L-isoleucine and L-valine, respectively. The protein is Dihydroxy-acid dehydratase of Akkermansia muciniphila (strain ATCC BAA-835 / DSM 22959 / JCM 33894 / BCRC 81048 / CCUG 64013 / CIP 107961 / Muc).